Here is a 320-residue protein sequence, read N- to C-terminus: Nucleoporin Nup37 (320 aa).

4 WD repeats span residues 67–113 (KEQR…FTSL), 118–157 (GHGD…ENVI), 160–200 (GLSS…TVIS), and 203–242 (SPKF…VPAD).

The protein localises to the nucleus. The protein resides in the nuclear pore complex. Functionally, as part of the nuclear pore complex (NPC), has a role in its assembly and function. Its function is as follows. (Microbial infection) Required for optimal replication of E.chaffeensis. The sequence is that of Nucleoporin Nup37 from Drosophila melanogaster (Fruit fly).